The following is a 122-amino-acid chain: Large ribosomal subunit protein uL14c (122 aa).

Belongs to the universal ribosomal protein uL14 family. In terms of assembly, part of the 50S ribosomal subunit.

The protein localises to the plastid. It is found in the chloroplast. Binds to 23S rRNA. The chain is Large ribosomal subunit protein uL14c from Chlamydomonas reinhardtii (Chlamydomonas smithii).